The chain runs to 261 residues: uncharacterized protein (261 aa).

The N-terminal stretch at 1 to 22 (MRDSKRVVLYISIMVLSIFIIG) is a signal peptide. Cysteine 23 carries N-palmitoyl cysteine lipidation. The S-diacylglycerol cysteine moiety is linked to residue cysteine 23.

The protein belongs to the staphylococcal tandem lipoprotein family.

It localises to the cell membrane. This is an uncharacterized protein from Staphylococcus aureus (strain N315).